The sequence spans 104 residues: Large ribosomal subunit protein bL21 (104 aa).

Belongs to the bacterial ribosomal protein bL21 family. As to quaternary structure, part of the 50S ribosomal subunit. Contacts protein L20.

Its function is as follows. This protein binds to 23S rRNA in the presence of protein L20. In Tropheryma whipplei (strain Twist) (Whipple's bacillus), this protein is Large ribosomal subunit protein bL21.